A 120-amino-acid chain; its full sequence is NAD(P)H-quinone oxidoreductase subunit 3, chloroplastic (120 aa).

3 helical membrane-spanning segments follow: residues I9–G29, M64–M84, and V88–L108.

It belongs to the complex I subunit 3 family. As to quaternary structure, NDH is composed of at least 16 different subunits, 5 of which are encoded in the nucleus.

Its subcellular location is the plastid. The protein localises to the chloroplast thylakoid membrane. The enzyme catalyses a plastoquinone + NADH + (n+1) H(+)(in) = a plastoquinol + NAD(+) + n H(+)(out). It catalyses the reaction a plastoquinone + NADPH + (n+1) H(+)(in) = a plastoquinol + NADP(+) + n H(+)(out). Its function is as follows. NDH shuttles electrons from NAD(P)H:plastoquinone, via FMN and iron-sulfur (Fe-S) centers, to quinones in the photosynthetic chain and possibly in a chloroplast respiratory chain. The immediate electron acceptor for the enzyme in this species is believed to be plastoquinone. Couples the redox reaction to proton translocation, and thus conserves the redox energy in a proton gradient. This chain is NAD(P)H-quinone oxidoreductase subunit 3, chloroplastic, found in Ranunculus macranthus (Large buttercup).